The sequence spans 185 residues: UPF0200 protein Mevan_0592 (185 aa).

Position 8–15 (8–15) interacts with ATP; that stretch reads GMPGSGKS.

It belongs to the UPF0200 family.

This chain is UPF0200 protein Mevan_0592, found in Methanococcus vannielii (strain ATCC 35089 / DSM 1224 / JCM 13029 / OCM 148 / SB).